A 530-amino-acid chain; its full sequence is Autoinducer-2 kinase (530 aa).

It belongs to the FGGY kinase family.

The protein resides in the cytoplasm. It catalyses the reaction (S)-4,5-dihydroxypentane-2,3-dione + ATP = (2S)-2-hydroxy-3,4-dioxopentyl phosphate + ADP + H(+). In terms of biological role, catalyzes the phosphorylation of autoinducer-2 (AI-2) to phospho-AI-2, which subsequently inactivates the transcriptional regulator LsrR and leads to the transcription of the lsr operon. Phosphorylates the ring-open form of (S)-4,5-dihydroxypentane-2,3-dione (DPD), which is the precursor to all AI-2 signaling molecules, at the C5 position. The chain is Autoinducer-2 kinase from Escherichia coli (strain ATCC 8739 / DSM 1576 / NBRC 3972 / NCIMB 8545 / WDCM 00012 / Crooks).